We begin with the raw amino-acid sequence, 52 residues long: Thiocillin (52 aa).

The propeptide occupies 1 to 38; the sequence is MSEIKKALNTLEIEDFDAIEMVDVDAMPENEALEIMGA. Residues 39–40 constitute a cross-link (thiazole-4-carboxylic acid (Ser-Cys)); that stretch reads SC. The pyridine-2,5-dicarboxylic acid (Ser-Cys) (with S-48) cross-link spans 39–47; the sequence is SCTTCVCTC. A cross-link (pyridine-2,5-dicarboxylic acid (Ser-Ser) (with C-47)) is located at residues 39 to 48; it reads SCTTCVCTCS. The residue at position 42 (Thr-42) is a (Z)-2,3-didehydrobutyrine. The thiazole-4-carboxylic acid (Thr-Cys) cross-link spans 42-43; it reads TC. Position 44 is a 3-hydroxyvaline (Val); partial (Val-44). The segment at residues 44–45 is a cross-link (thiazole-4-carboxylic acid (Val-Cys)); that stretch reads VC. An O-methylthreonine; partial modification is found at Thr-46. Residues 46–47 constitute a cross-link (thiazole-4-carboxylic acid (Thr-Cys)); sequence TC. Positions 48-49 form a cross-link, thiazole-4-carboxylic acid (Ser-Cys); it reads SC. A cross-link (thiazole-4-carboxylic acid (Cys-Cys)) is located at residues 49 to 50; it reads CC. At Thr-51 the chain carries (Z)-2,3-didehydrobutyrine. Residue Thr-52 is modified to 1-amino-2-propanone; alternate. Thr-52 carries the decarboxylated threonine; alternate modification.

Belongs to the thiocillin family. Post-translationally, maturation of thiazole and oxazole containing antibiotics involves the enzymatic condensation of a Cys, Ser or Thr with the alpha-carbonyl of the preceding amino acid to form a thioether or ether bond, then dehydration to form a double bond with the alpha-amino nitrogen. Thiazoline or oxazoline ring are dehydrogenated to form thiazole or oxazole rings. In terms of processing, maturation of pyridinyl containing antibiotics involves the cross-linking of a Ser and a Cys-Ser pair usually separated by 7 or 8 residues along the peptide chain. The Ser residues are dehydrated to didehydroalanines, then bonded between their beta carbons. The alpha carbonyl of the Cys condenses with alpha carbon of the first Ser to form a pyridinyl ring. The ring may be multiply dehydrogenated to form a pyridine ring with loss of the amino nitrogen of the first Ser. The 8 possible modification isomers, differing in the presence of modifications at three positions, have been characterized in PubMed:19196969. Val-44 is modified to 3-hydroxyvaline in forms thiocillin I, thiocillin II, YM-266183, and YM-266184. Thr-46 is modified to O-methylthreonine in forms thiocillin II, thiocillin III, thiocillin IV, and YM-266184. Thr-52 is decarboxylated to (R)-1-aminopropan-2-ol in forms micrococcin P1, thiocillin I, thiocillin II, and thiocillin III. Thr-52 is decarboxylated and oxidized to 1-amino-2-propanone in forms micrococcin P2, YM-266183, YM-266184. and thiocillin IV. Post-translationally, the structure of 2,3-didehydrobutyrines is not discussed in PubMed:19196969. However, in Fig. 3 the residues are diagrammed as Z-isomers.

The protein localises to the secreted. Its function is as follows. Has bacteriocidal activity against Gram-positive bacteria, but not against Gram-negative bacteria. Inhibits bacterial protein biosynthesis by acting on the elongation factor Tu (EF-Tu). This Bacillus cereus (strain ATCC 14579 / DSM 31 / CCUG 7414 / JCM 2152 / NBRC 15305 / NCIMB 9373 / NCTC 2599 / NRRL B-3711) protein is Thiocillin.